Here is a 662-residue protein sequence, read N- to C-terminus: Biosynthetic arginine decarboxylase (662 aa).

K126 carries the N6-(pyridoxal phosphate)lysine modification. Residue 308 to 318 (LNVGGGLGVDY) participates in substrate binding.

Belongs to the Orn/Lys/Arg decarboxylase class-II family. SpeA subfamily. Requires Mg(2+) as cofactor. Pyridoxal 5'-phosphate is required as a cofactor.

It carries out the reaction L-arginine + H(+) = agmatine + CO2. Its function is as follows. Catalyzes the biosynthesis of agmatine from arginine. This is Biosynthetic arginine decarboxylase from Deinococcus radiodurans (strain ATCC 13939 / DSM 20539 / JCM 16871 / CCUG 27074 / LMG 4051 / NBRC 15346 / NCIMB 9279 / VKM B-1422 / R1).